A 451-amino-acid polypeptide reads, in one-letter code: Nicotinamide phosphoribosyltransferase (451 aa).

Residue Arg-209 participates in diphosphate binding. Beta-nicotinamide D-ribonucleotide is bound at residue Asp-232. Positions 248 and 309 each coordinate diphosphate. Residues 309–311 (RPD), 364–365 (GD), and Arg-403 each bind beta-nicotinamide D-ribonucleotide.

This sequence belongs to the NAPRTase family.

It catalyses the reaction beta-nicotinamide D-ribonucleotide + diphosphate = 5-phospho-alpha-D-ribose 1-diphosphate + nicotinamide + H(+). Its pathway is cofactor biosynthesis; NAD(+) biosynthesis; nicotinamide D-ribonucleotide from 5-phospho-alpha-D-ribose 1-diphosphate and nicotinamide: step 1/1. Functionally, catalyzes the condensation of nicotinamide with 5-phosphoribosyl-1-pyrophosphate to yield nicotinamide mononucleotide, an intermediate in the biosynthesis of NAD. The sequence is that of Nicotinamide phosphoribosyltransferase from Mycoplasma pneumoniae (strain ATCC 29342 / M129 / Subtype 1) (Mycoplasmoides pneumoniae).